The following is a 759-amino-acid chain: DNA topoisomerase 3 (759 aa).

Residues Arg3–Ser147 form the Toprim domain. Residues Asp165–Phe590 enclose the Topo IA-type catalytic domain. Tyr334 (O-(5'-phospho-DNA)-tyrosine intermediate) is an active-site residue. A disordered region spans residues Asp609–Phe715. Over residues Ala614–Pro639 the composition is skewed to gly residues. The span at Thr640–Pro649 shows a compositional bias: pro residues. Residues Cys716, Cys718, Cys743, and Cys753 each contribute to the Zn(2+) site. The GRF-type zinc finger occupies Cys716–Ala759.

Belongs to the type IA topoisomerase family. In terms of assembly, component of the BTR double Holliday Junction dissolution complex composed of at least him-6, top-3, rmh-1 and rmif-2, which is involved in double strand break repair in the germline. May interact with rmh-1.

It is found in the nucleus. It carries out the reaction ATP-independent breakage of single-stranded DNA, followed by passage and rejoining.. In terms of biological role, component of the BTR double Holliday Junction dissolution complex, which is involved in homologous recombination during meiotic double strand break in the germline. Releases the supercoiling and torsional tension of DNA introduced during the DNA replication and transcription by transiently cleaving and rejoining one strand of the DNA duplex. Introduces a single-strand break via transesterification at a target site in duplex DNA. The scissile phosphodiester is attacked by the catalytic tyrosine of the enzyme, resulting in the formation of a DNA-(5'-phosphotyrosyl)-enzyme intermediate and the expulsion of a 3'-OH DNA strand. The free DNA strand than undergoes passage around the unbroken strand thus removing DNA supercoils. Finally, in the religation step, the DNA 3'-OH attacks the covalent intermediate to expel the active-site tyrosine and restore the DNA phosphodiester backbone. This Caenorhabditis elegans protein is DNA topoisomerase 3.